Reading from the N-terminus, the 200-residue chain is Probable GTP-binding protein EngB (200 aa).

Residues 25–199 (SGYEVAFAGR…ISLLDRWYEW (175 aa)) enclose the EngB-type G domain. Residues 33–40 (GRSNAGKS), 60–64 (GRTQL), 78–81 (DLPG), 145–148 (TKAD), and 178–180 (FSS) contribute to the GTP site. Residues Ser40 and Thr62 each coordinate Mg(2+).

Belongs to the TRAFAC class TrmE-Era-EngA-EngB-Septin-like GTPase superfamily. EngB GTPase family. Requires Mg(2+) as cofactor.

Functionally, necessary for normal cell division and for the maintenance of normal septation. The sequence is that of Probable GTP-binding protein EngB from Legionella pneumophila (strain Corby).